The chain runs to 186 residues: ATP synthase subunit delta (186 aa).

It belongs to the ATPase delta chain family. As to quaternary structure, F-type ATPases have 2 components, F(1) - the catalytic core - and F(0) - the membrane proton channel. F(1) has five subunits: alpha(3), beta(3), gamma(1), delta(1), epsilon(1). F(0) has three main subunits: a(1), b(2) and c(10-14). The alpha and beta chains form an alternating ring which encloses part of the gamma chain. F(1) is attached to F(0) by a central stalk formed by the gamma and epsilon chains, while a peripheral stalk is formed by the delta and b chains.

The protein localises to the cell inner membrane. Its function is as follows. F(1)F(0) ATP synthase produces ATP from ADP in the presence of a proton or sodium gradient. F-type ATPases consist of two structural domains, F(1) containing the extramembraneous catalytic core and F(0) containing the membrane proton channel, linked together by a central stalk and a peripheral stalk. During catalysis, ATP synthesis in the catalytic domain of F(1) is coupled via a rotary mechanism of the central stalk subunits to proton translocation. This protein is part of the stalk that links CF(0) to CF(1). It either transmits conformational changes from CF(0) to CF(1) or is implicated in proton conduction. In Brucella abortus (strain S19), this protein is ATP synthase subunit delta.